Here is a 214-residue protein sequence, read N- to C-terminus: tRNA (guanine-N(7)-)-methyltransferase (214 aa).

Glutamate 43, glutamate 68, aspartate 95, and aspartate 117 together coordinate S-adenosyl-L-methionine. Aspartate 117 is an active-site residue. Residues lysine 121, aspartate 153, and 191 to 194 contribute to the substrate site; that span reads TEYE.

The protein belongs to the class I-like SAM-binding methyltransferase superfamily. TrmB family.

It carries out the reaction guanosine(46) in tRNA + S-adenosyl-L-methionine = N(7)-methylguanosine(46) in tRNA + S-adenosyl-L-homocysteine. It functions in the pathway tRNA modification; N(7)-methylguanine-tRNA biosynthesis. Catalyzes the formation of N(7)-methylguanine at position 46 (m7G46) in tRNA. In Lachnoclostridium phytofermentans (strain ATCC 700394 / DSM 18823 / ISDg) (Clostridium phytofermentans), this protein is tRNA (guanine-N(7)-)-methyltransferase.